Here is a 511-residue protein sequence, read N- to C-terminus: Maturase K (511 aa).

Belongs to the intron maturase 2 family. MatK subfamily.

It localises to the plastid. It is found in the chloroplast. In terms of biological role, usually encoded in the trnK tRNA gene intron. Probably assists in splicing its own and other chloroplast group II introns. The sequence is that of Maturase K from Melica altissima (Siberian melic grass).